The sequence spans 122 residues: Large ribosomal subunit protein uL14c (122 aa).

Belongs to the universal ribosomal protein uL14 family. As to quaternary structure, part of the 50S ribosomal subunit.

Its subcellular location is the plastid. Binds to 23S rRNA. The chain is Large ribosomal subunit protein uL14c from Cuscuta exaltata (Tall dodder).